Here is a 69-residue protein sequence, read N- to C-terminus: Protein hunchback (69 aa).

C2H2-type zinc fingers lie at residues K1–H11, F17–H39, and Y45–H69.

It belongs to the hunchback C2H2-type zinc-finger protein family.

Its subcellular location is the nucleus. Functionally, gap class segmentation protein that controls development of head structures. This Apis mellifera (Honeybee) protein is Protein hunchback (hb).